Here is a 615-residue protein sequence, read N- to C-terminus: DNA mismatch repair protein MutL (615 aa).

Residues 363-397 (FAEPAVREPVAPRYTPAPASGSRPAAPWPNAQPGY) form a disordered region. Low complexity predominate over residues 378 to 391 (PAPASGSRPAAPWP).

It belongs to the DNA mismatch repair MutL/HexB family.

Its function is as follows. This protein is involved in the repair of mismatches in DNA. It is required for dam-dependent methyl-directed DNA mismatch repair. May act as a 'molecular matchmaker', a protein that promotes the formation of a stable complex between two or more DNA-binding proteins in an ATP-dependent manner without itself being part of a final effector complex. The protein is DNA mismatch repair protein MutL of Escherichia coli O157:H7 (strain EC4115 / EHEC).